The chain runs to 124 residues: Ribonuclease pancreatic (124 aa).

Basic and acidic residues predominate over residues 1–13 (SETAAEKFERQHM). Residues 1–23 (SETAAEKFERQHMDSYSSSSSNS) are disordered. Substrate-binding residues include K7 and R10. H12 serves as the catalytic Proton acceptor. 4 cysteine pairs are disulfide-bonded: C26-C84, C40-C95, C58-C110, and C65-C72. Substrate is bound by residues 41–45 (KPVNT), K66, and R85. The Proton donor role is filled by H119.

This sequence belongs to the pancreatic ribonuclease family. As to quaternary structure, monomer. Interacts with and forms tight 1:1 complexes with RNH1. Dimerization of two such complexes may occur. Interaction with RNH1 inhibits this protein. As to expression, pancreas.

It localises to the secreted. It carries out the reaction an [RNA] containing cytidine + H2O = an [RNA]-3'-cytidine-3'-phosphate + a 5'-hydroxy-ribonucleotide-3'-[RNA].. The enzyme catalyses an [RNA] containing uridine + H2O = an [RNA]-3'-uridine-3'-phosphate + a 5'-hydroxy-ribonucleotide-3'-[RNA].. Functionally, endonuclease that catalyzes the cleavage of RNA on the 3' side of pyrimidine nucleotides. Acts on single-stranded and double-stranded RNA. In Camelus dromedarius (Dromedary), this protein is Ribonuclease pancreatic (RNASE1).